Reading from the N-terminus, the 420-residue chain is Glucose-1-phosphate adenylyltransferase (420 aa).

Residues Tyr-107, Gly-173, 188–189, and Ser-206 contribute to the alpha-D-glucose 1-phosphate site; that span reads EK.

It belongs to the bacterial/plant glucose-1-phosphate adenylyltransferase family. In terms of assembly, homotetramer.

It carries out the reaction alpha-D-glucose 1-phosphate + ATP + H(+) = ADP-alpha-D-glucose + diphosphate. The protein operates within glycan biosynthesis; glycogen biosynthesis. Involved in the biosynthesis of ADP-glucose, a building block required for the elongation reactions to produce glycogen. Catalyzes the reaction between ATP and alpha-D-glucose 1-phosphate (G1P) to produce pyrophosphate and ADP-Glc. The polypeptide is Glucose-1-phosphate adenylyltransferase (Shewanella baltica (strain OS185)).